A 326-amino-acid chain; its full sequence is ELAV-like protein 1-B (326 aa).

RRM domains are found at residues 20–98 (TNLI…FARP), 106–186 (ANLY…FAAN), and 244–322 (WCIF…FKTS).

This sequence belongs to the RRM elav family. As to quaternary structure, interacts (via RRM3) with cirbp. Unable to form oligomers. Part of a ribonucleoprotein (RNP) complex, at least composed of elavl1/elrA and/or elavl2/elrB, igf2bp3/vg1RBP, ddx6/Xp54, ybx2/frgy2, lsm14b/rap55b and, in a subset of RNP complexes, stau1/staufen.

It localises to the cytoplasm. It is found in the cell cortex. Functionally, RNA-binding protein that binds to the 3'-UTR region of mRNAs and increases their stability. Involved in embryonic stem cells (ESCs) differentiation: preferentially binds mRNAs that are not methylated by N6-methyladenosine (m6A), stabilizing them, promoting ESCs differentiation. Binds to poly-U elements and AU-rich elements (AREs) in the 3'-UTR of target mRNAs. Acts cooperatively with cribp to stabilize AU-rich sequence (ARE)-containing mRNAs. May play a role during gastrulation. Required for the vegetal localization of vg1 mRNA. This chain is ELAV-like protein 1-B (elavl1-b), found in Xenopus laevis (African clawed frog).